Reading from the N-terminus, the 247-residue chain is 3-deoxy-manno-octulosonate cytidylyltransferase (247 aa).

This sequence belongs to the KdsB family.

The protein resides in the cytoplasm. It catalyses the reaction 3-deoxy-alpha-D-manno-oct-2-ulosonate + CTP = CMP-3-deoxy-beta-D-manno-octulosonate + diphosphate. It participates in nucleotide-sugar biosynthesis; CMP-3-deoxy-D-manno-octulosonate biosynthesis; CMP-3-deoxy-D-manno-octulosonate from 3-deoxy-D-manno-octulosonate and CTP: step 1/1. It functions in the pathway bacterial outer membrane biogenesis; lipopolysaccharide biosynthesis. Activates KDO (a required 8-carbon sugar) for incorporation into bacterial lipopolysaccharide in Gram-negative bacteria. The polypeptide is 3-deoxy-manno-octulosonate cytidylyltransferase (Pelodictyon phaeoclathratiforme (strain DSM 5477 / BU-1)).